The following is a 474-amino-acid chain: Protein CyaE (474 aa).

Positions 1-31 (MAAVQVRRRGRALALALWAGFALSVGGGVRA) are cleaved as a signal peptide.

This sequence belongs to the outer membrane factor (OMF) (TC 1.B.17) family.

It is found in the cell outer membrane. Its function is as follows. CyaE is necessary for transport of calmodulin-sensitive adenylate cyclase-hemolysin (cyclolysin). This Bordetella pertussis (strain Tohama I / ATCC BAA-589 / NCTC 13251) protein is Protein CyaE (cyaE).